We begin with the raw amino-acid sequence, 372 residues long: SAM domain-containing protein SAMSN-1 (372 aa).

Positions 1–71 (MLKRKPSNAS…SGGSLGKKVR (71 aa)) are disordered. Residues 20 to 25 (RSSSFG) carry the Important for interaction with 14-3-3 proteins motif. Phosphoserine occurs at positions 23 and 34. Positions 37 to 49 (KSDDSIEVHDREL) are enriched in basic and acidic residues. Over residues 52–63 (GSEEQSKTSSSG) the composition is skewed to low complexity. Serine 74 is subject to Phosphoserine. Residue threonine 76 is modified to Phosphothreonine. 3 positions are modified to phosphoserine: serine 90, serine 97, and serine 119. Residues 90-111 (SEEKEEESGEEALPYRNSDPMI) form a disordered region. Residues 129-146 (LYSGQSSSSGITSCSDGT) show a composition bias toward low complexity. The interval 129 to 153 (LYSGQSSSSGITSCSDGTSNRDSFR) is disordered. The residue at position 160 (tyrosine 160) is a Phosphotyrosine. Residues 163–224 (PFCGRAKVHT…KFIYVDVILE (62 aa)) form the SH3 domain. An SAM domain is found at 241-305 (ENHQTIQEFL…LSAAESLLDE (65 aa)). Residues 304–372 (DEETTVEHEK…QKIAITESSD (69 aa)) form a disordered region. Positions 317-329 (PLSSNPDILSASQ) are enriched in polar residues.

Interacts with FASLG. Interacts with phosphotyrosine containing proteins. Interacts (via SH3 domain) with CTTN. Interacts (phosphorylated at Ser-23) with YWHAB, YWHAE, YWHAG, YWHAH, YWHAZ and SFN. Interacts directly with SAP30 and HDAC1. Identified in a complex with SAP30 and HDAC1. Detected in spleen and lymph node (at protein level).

It is found in the nucleus. The protein localises to the cytoplasm. The protein resides in the cell projection. Its subcellular location is the ruffle. Functionally, negative regulator of B-cell activation. Down-regulates cell proliferation (in vitro). Promotes RAC1-dependent membrane ruffle formation and reorganization of the actin cytoskeleton. Regulates cell spreading and cell polarization. Stimulates HDAC1 activity. Regulates LYN activity by modulating its tyrosine phosphorylation. The polypeptide is SAM domain-containing protein SAMSN-1 (Samsn1) (Mus musculus (Mouse)).